A 677-amino-acid chain; its full sequence is Methionine--tRNA ligase (677 aa).

Positions 15-25 match the 'HIGH' region motif; it reads PYANGSIHLGH. The Zn(2+) site is built by cysteine 146, cysteine 149, cysteine 159, and cysteine 162. The 'KMSKS' region signature appears at 333–337; the sequence is KMSKS. Lysine 336 serves as a coordination point for ATP. In terms of domain architecture, tRNA-binding spans 575-677; that stretch reads DFAKIDLRVA…DGAKPGQQVK (103 aa).

This sequence belongs to the class-I aminoacyl-tRNA synthetase family. MetG type 1 subfamily. In terms of assembly, homodimer. Zn(2+) is required as a cofactor.

The protein resides in the cytoplasm. The catalysed reaction is tRNA(Met) + L-methionine + ATP = L-methionyl-tRNA(Met) + AMP + diphosphate. Its function is as follows. Is required not only for elongation of protein synthesis but also for the initiation of all mRNA translation through initiator tRNA(fMet) aminoacylation. The polypeptide is Methionine--tRNA ligase (Salmonella paratyphi C (strain RKS4594)).